Consider the following 601-residue polypeptide: MTHIESTFSFLGLNPFIIQSLNEMGYVKPSPIQASCIPLLLEGRDVLGMAQTGSGKTAAFSLPLLHNLNINLKAPQILVLAPTRELAVQVAEAFSDFSKYMIGIHVLPLYGGQRYELQLRALRQGPQIVVGTPGRLLDHLKRGTLNLSNLHGLVLDEADEMLRMGFIEDVETIMAQIPKEHQTALFSATMPEAIRRISKRFMRNPKEIKIQSNITTRPDIKQSYWMVYGRKTDALIRFLEAEDFSATIIFVRTKNATLEVSEALERNGYNSAALNGDMNQALREQTLERLKNGRLDILIATDVAARGLDVDRISFVINYDIPMDSESYVHRIGRTGRAGRAGRALLFVENRERRLLRNIERTMKQSIPEVQLPKVELLCQRRLEQFAKKVQQQLESRDLDEYSALLDKLYSTDDLDIKTLAAALLKMAQGERPLIIKPDVIKRQSRDLLFQDDRRREDNRNSRTRRDRRDINKDAELYRIEVGRNDGVEVRHIVGAIANEGNINSRNIGNIKLFSSYSTIELPKGMSKDLLQTFNRTRILNKPINMKLLRDSRHYENKTTHRSIFNKDKNSNRRVSDGSFNKSNSPKKTEFKSSFFRRRNV.

The short motif at 6-34 (STFSFLGLNPFIIQSLNEMGYVKPSPIQA) is the Q motif element. Residues 37–208 (IPLLLEGRDV…KRFMRNPKEI (172 aa)) enclose the Helicase ATP-binding domain. Residue 50 to 57 (AQTGSGKT) coordinates ATP. Positions 156 to 159 (DEAD) match the DEAD box motif. Positions 231-378 (KTDALIRFLE…EVQLPKVELL (148 aa)) constitute a Helicase C-terminal domain. The segment covering 552–576 (SRHYENKTTHRSIFNKDKNSNRRVS) has biased composition (basic and acidic residues). The interval 552–601 (SRHYENKTTHRSIFNKDKNSNRRVSDGSFNKSNSPKKTEFKSSFFRRRNV) is disordered.

This sequence belongs to the DEAD box helicase family. DeaD/CsdA subfamily.

The protein resides in the cytoplasm. It catalyses the reaction ATP + H2O = ADP + phosphate + H(+). Functionally, DEAD-box RNA helicase involved in various cellular processes at low temperature, including ribosome biogenesis, mRNA degradation and translation initiation. The chain is ATP-dependent RNA helicase DeaD from Buchnera aphidicola subsp. Acyrthosiphon pisum (strain APS) (Acyrthosiphon pisum symbiotic bacterium).